A 51-amino-acid polypeptide reads, in one-letter code: MDPAPEPVTYVCGDCGQENTLKSGDVIQCRECGYRILYKKRTRRVVQYEAR.

Cys-12, Cys-15, Cys-29, and Cys-32 together coordinate Zn(2+).

This sequence belongs to the archaeal Rpo12/eukaryotic RPC10 RNA polymerase subunit family. In terms of assembly, component of the RNA polymerase II, IV and V complexes. Associates with the mediator complex. Interacts with NRPD1.

The protein resides in the nucleus. In terms of biological role, DNA-dependent RNA polymerase catalyzes the transcription of DNA into RNA using the four ribonucleoside triphosphates as substrates. Component of RNA polymerase II which synthesizes mRNA precursors and many functional non-coding RNAs. Pol II is the central component of the basal RNA polymerase II transcription machinery. It is composed of mobile elements that move relative to each other. Component of RNA polymerases IV and V which mediate short-interfering RNAs (siRNA) accumulation and subsequent RNA-directed DNA methylation-dependent (RdDM) transcriptional gene silencing (TGS) of endogenous repeated sequences, including transposable elements. This Arabidopsis thaliana (Mouse-ear cress) protein is DNA-directed RNA polymerases II, IV and V subunit 12 (NRPB12).